The following is a 568-amino-acid chain: Putative DEAD-box RNA helicase HEL64 (568 aa).

A disordered region spans residues 1–34 (MEETYSPFTGRQGQYNQGYNGGGRRDSRGGMGER). Residues 23-34 (GRRDSRGGMGER) are compositionally biased toward basic and acidic residues. The Q motif signature appears at 102–130 (FDHLCGIVPPYLLKKLTAQNFTAPTPVQA). One can recognise a Helicase ATP-binding domain in the interval 133–307 (WPVLLSGRDL…AEFQKQWIRI (175 aa)). 146–153 (AKTGSGKT) is a binding site for ATP. Residues 255 to 258 (DEAD) carry the DEAD box motif. In terms of domain architecture, Helicase C-terminal spans 335–483 (ELRKLMQEHR…EIPDWMIEWN (149 aa)).

The protein belongs to the DEAD box helicase family. DDX5/DBP2 subfamily.

The protein localises to the nucleus. The enzyme catalyses ATP + H2O = ADP + phosphate + H(+). The protein is Putative DEAD-box RNA helicase HEL64 (HEL64) of Trypanosoma brucei brucei.